Consider the following 542-residue polypeptide: Phosphoenolpyruvate carboxykinase (ATP) (542 aa).

Residues Arg67, Tyr208, and Lys214 each coordinate substrate. ATP is bound by residues Lys214, His233, and Gly249–Thr257. Mn(2+) is bound by residues Lys214 and His233. Asp270 serves as a coordination point for Mn(2+). Residues Glu298, Arg334, Arg450 to Ile451, and Thr456 contribute to the ATP site. Arg334 is a binding site for substrate.

Belongs to the phosphoenolpyruvate carboxykinase (ATP) family. As to quaternary structure, monomer. Requires Mn(2+) as cofactor.

The protein localises to the cytoplasm. The enzyme catalyses oxaloacetate + ATP = phosphoenolpyruvate + ADP + CO2. The protein operates within carbohydrate biosynthesis; gluconeogenesis. Involved in the gluconeogenesis. Catalyzes the conversion of oxaloacetate (OAA) to phosphoenolpyruvate (PEP) through direct phosphoryl transfer between the nucleoside triphosphate and OAA. The sequence is that of Phosphoenolpyruvate carboxykinase (ATP) from Vibrio vulnificus (strain YJ016).